The chain runs to 843 residues: Protein P (843 aa).

Residues 1 to 177 (MPLSYQHFRK…FCGSPYSWEQ (177 aa)) form a terminal protein domain (TP) region. The tract at residues 178 to 346 (DLQHGRLVFQ…YCLCHIVNLI (169 aa)) is spacer. The tract at residues 220–265 (QSRLGPQPAQGQLAGRQQGGSGSIRARVHPSPWGTVGVEPSGSGPT) is disordered. Residues 223 to 235 (LGPQPAQGQLAGR) show a composition bias toward low complexity. The polymerase/reverse transcriptase domain (RT) stretch occupies residues 347–690 (EDWGPCTEHG…YLNLYPVARQ (344 aa)). Residues 357–600 (EHLIRTPRTP…YSLNFMGYVI (244 aa)) enclose the Reverse transcriptase domain. Mg(2+) is bound by residues Asp-429, Asp-551, and Asp-552.

Belongs to the hepadnaviridae P protein family.

It carries out the reaction DNA(n) + a 2'-deoxyribonucleoside 5'-triphosphate = DNA(n+1) + diphosphate. The enzyme catalyses Endonucleolytic cleavage to 5'-phosphomonoester.. With respect to regulation, activated by host HSP70 and HSP40 in vitro to be able to bind the epsilon loop of the pgRNA. Because deletion of the RNase H region renders the protein partly chaperone-independent, the chaperones may be needed indirectly to relieve occlusion of the RNA-binding site by this domain. Inhibited by several reverse-transcriptase inhibitors: Lamivudine, Adefovir and Entecavir. Multifunctional enzyme that converts the viral RNA genome into dsDNA in viral cytoplasmic capsids. This enzyme displays a DNA polymerase activity that can copy either DNA or RNA templates, and a ribonuclease H (RNase H) activity that cleaves the RNA strand of RNA-DNA heteroduplexes in a partially processive 3'- to 5'-endonucleasic mode. Neo-synthesized pregenomic RNA (pgRNA) are encapsidated together with the P protein, and reverse-transcribed inside the nucleocapsid. Initiation of reverse-transcription occurs first by binding the epsilon loop on the pgRNA genome, and is initiated by protein priming, thereby the 5'-end of (-)DNA is covalently linked to P protein. Partial (+)DNA is synthesized from the (-)DNA template and generates the relaxed circular DNA (RC-DNA) genome. After budding and infection, the RC-DNA migrates in the nucleus, and is converted into a plasmid-like covalently closed circular DNA (cccDNA). The activity of P protein does not seem to be necessary for cccDNA generation, and is presumably released from (+)DNA by host nuclear DNA repair machinery. The polypeptide is Protein P (Hepatitis B virus genotype B2 (isolate Vietnam/9873/1997) (HBV-B)).